A 474-amino-acid chain; its full sequence is Glutamate--tRNA ligase (474 aa).

The 'HIGH' region signature appears at 11-21 (PSPTGFLHIGG). The 'KMSKS' region signature appears at 240–244 (KLSKR). Residue Lys243 participates in ATP binding.

Belongs to the class-I aminoacyl-tRNA synthetase family. Glutamate--tRNA ligase type 1 subfamily. Monomer.

It localises to the cytoplasm. It carries out the reaction tRNA(Glu) + L-glutamate + ATP = L-glutamyl-tRNA(Glu) + AMP + diphosphate. Its function is as follows. Catalyzes the attachment of glutamate to tRNA(Glu) in a two-step reaction: glutamate is first activated by ATP to form Glu-AMP and then transferred to the acceptor end of tRNA(Glu). The chain is Glutamate--tRNA ligase from Nitrobacter winogradskyi (strain ATCC 25391 / DSM 10237 / CIP 104748 / NCIMB 11846 / Nb-255).